The primary structure comprises 300 residues: MPKHFTRIRDLGFEGAWKVLERAKEMKDTGYRGRTLEGKVATLIFEKASTRTRISFEVAVRHLGGTTIFMTPAESQLGRSEPLRDTARVISRYTDCMIVRTFGQAKIDELASFGSIPVVNALTDEGHPCQVMSDVLTMYERTPDLSQVRVAWIGDGNNMANSWIEAAMYFPFELFMAFPEGYEPDRQLLGLALEAGAKIFLTRDPHMAIDGAHYVNTDVWASMGQEEEQKRREAAFKGFCIDGALMGRAHPDAKFMHCLPAHRGEEVTDEVMESPASIVWDQAENRLHMQKAILEWVFTE.

Carbamoyl phosphate-binding positions include 49–52 (STRT), Gln76, Arg100, and 127–130 (HPCQ). Residues Asn158, Asp218, and 222–223 (SM) each bind L-ornithine. Carbamoyl phosphate is bound by residues 258–259 (CL) and Arg286.

It belongs to the aspartate/ornithine carbamoyltransferase superfamily. OTCase family.

Its subcellular location is the cytoplasm. The enzyme catalyses carbamoyl phosphate + L-ornithine = L-citrulline + phosphate + H(+). Its pathway is amino-acid biosynthesis; L-arginine biosynthesis; L-arginine from L-ornithine and carbamoyl phosphate: step 1/3. Reversibly catalyzes the transfer of the carbamoyl group from carbamoyl phosphate (CP) to the N(epsilon) atom of ornithine (ORN) to produce L-citrulline. The protein is Ornithine carbamoyltransferase of Nitratidesulfovibrio vulgaris (strain ATCC 29579 / DSM 644 / CCUG 34227 / NCIMB 8303 / VKM B-1760 / Hildenborough) (Desulfovibrio vulgaris).